The following is a 187-amino-acid chain: Adenine phosphoribosyltransferase 1 (187 aa).

Phosphoserine is present on Ser-68. 133-137 (ATGGS) is a binding site for AMP.

Belongs to the purine/pyrimidine phosphoribosyltransferase family. Homodimer. Mg(2+) is required as a cofactor.

It localises to the cytoplasm. Its subcellular location is the nucleus. The enzyme catalyses AMP + diphosphate = 5-phospho-alpha-D-ribose 1-diphosphate + adenine. It functions in the pathway purine metabolism; AMP biosynthesis via salvage pathway; AMP from adenine: step 1/1. In terms of biological role, catalyzes a salvage reaction resulting in the formation of AMP, that is energically less costly than de novo synthesis. The sequence is that of Adenine phosphoribosyltransferase 1 from Saccharomyces cerevisiae (strain ATCC 204508 / S288c) (Baker's yeast).